The primary structure comprises 159 residues: Phosphopantetheine adenylyltransferase (159 aa).

Residue T9 participates in substrate binding. ATP-binding positions include 9–10 and H17; that span reads TF. Substrate is bound by residues K41, L73, and R87. ATP-binding positions include 88–90, E98, and 123–129; these read GLR and YSFISST.

The protein belongs to the bacterial CoaD family. In terms of assembly, homohexamer. Mg(2+) is required as a cofactor.

The protein resides in the cytoplasm. The catalysed reaction is (R)-4'-phosphopantetheine + ATP + H(+) = 3'-dephospho-CoA + diphosphate. The protein operates within cofactor biosynthesis; coenzyme A biosynthesis; CoA from (R)-pantothenate: step 4/5. Its function is as follows. Reversibly transfers an adenylyl group from ATP to 4'-phosphopantetheine, yielding dephospho-CoA (dPCoA) and pyrophosphate. This Pseudomonas syringae pv. tomato (strain ATCC BAA-871 / DC3000) protein is Phosphopantetheine adenylyltransferase.